We begin with the raw amino-acid sequence, 148 residues long: Trypsin inhibitor CMe (148 aa).

A signal peptide spans 1-24; the sequence is MAFKYQLLLSAAVMLAILVATATS.

This sequence belongs to the protease inhibitor I6 (cereal trypsin/alpha-amylase inhibitor) family. In terms of processing, five disulfide bonds, which are essential for the inhibitor activity, are probably present. In terms of tissue distribution, expressed in the developing endosperm. Not detected in embryo, aleurone, coleoptile, roots and leaves.

The protein localises to the secreted. Functionally, inhibits trypsin in vitro. Probably plays a protective role through inhibition of insect midgut proteases. The polypeptide is Trypsin inhibitor CMe (ITR1) (Hordeum vulgare (Barley)).